Consider the following 274-residue polypeptide: Thiamine kinase (274 aa).

It belongs to the thiamine kinase family.

It catalyses the reaction thiamine + ATP = thiamine phosphate + ADP + H(+). Its pathway is cofactor biosynthesis; thiamine diphosphate biosynthesis; thiamine phosphate from thiamine: step 1/1. Catalyzes the ATP-dependent phosphorylation of thiamine to thiamine phosphate. Is involved in thiamine salvage. In Escherichia coli O157:H7 (strain EC4115 / EHEC), this protein is Thiamine kinase.